The chain runs to 159 residues: Ribosomal RNA large subunit methyltransferase H (159 aa).

Residues Leu-76, Gly-108, and 127-132 (FSKMTL) contribute to the S-adenosyl-L-methionine site.

Belongs to the RNA methyltransferase RlmH family. Homodimer.

The protein localises to the cytoplasm. It catalyses the reaction pseudouridine(1915) in 23S rRNA + S-adenosyl-L-methionine = N(3)-methylpseudouridine(1915) in 23S rRNA + S-adenosyl-L-homocysteine + H(+). Functionally, specifically methylates the pseudouridine at position 1915 (m3Psi1915) in 23S rRNA. The polypeptide is Ribosomal RNA large subunit methyltransferase H (Bacillus cereus (strain ATCC 10987 / NRS 248)).